Reading from the N-terminus, the 51-residue chain is Mitochondrial import receptor subunit TOM5 homolog (51 aa).

Met-1 bears the N-acetylmethionine mark. A Glycyl lysine isopeptide (Lys-Gly) (interchain with G-Cter in SUMO2) cross-link involves residue Lys-10. The chain crosses the membrane as a helical span at residues 27 to 45 (SIRNFLIYVALLRVTPFIL).

The protein belongs to the Tom5 family. As to quaternary structure, forms part of the preprotein translocase complex of the outer mitochondrial membrane (TOM complex) which consists of at least 7 different proteins (TOMM5, TOMM6, TOMM7, TOMM20, TOMM22, TOMM40 and TOMM70).

Its subcellular location is the mitochondrion outer membrane. The chain is Mitochondrial import receptor subunit TOM5 homolog from Bos taurus (Bovine).